The primary structure comprises 901 residues: Protein translocase subunit SecA (901 aa).

ATP contacts are provided by residues Gln-89, 107–111 (GEGKT), and Asp-502. Zn(2+) is bound by residues Cys-884, Cys-886, Cys-895, and His-896.

The protein belongs to the SecA family. In terms of assembly, monomer and homodimer. Part of the essential Sec protein translocation apparatus which comprises SecA, SecYEG and auxiliary proteins SecDF-YajC and YidC. Zn(2+) is required as a cofactor.

It localises to the cell inner membrane. The protein resides in the cytoplasm. It catalyses the reaction ATP + H2O + cellular proteinSide 1 = ADP + phosphate + cellular proteinSide 2.. In terms of biological role, part of the Sec protein translocase complex. Interacts with the SecYEG preprotein conducting channel. Has a central role in coupling the hydrolysis of ATP to the transfer of proteins into and across the cell membrane, serving both as a receptor for the preprotein-SecB complex and as an ATP-driven molecular motor driving the stepwise translocation of polypeptide chains across the membrane. The protein is Protein translocase subunit SecA of Sinorhizobium fredii (strain NBRC 101917 / NGR234).